The sequence spans 395 residues: Putative ankyrin repeat protein RF_0950 (395 aa).

ANK repeat units lie at residues 3–32, 36–65, 69–98, 101–130, 134–166, 172–201, and 205–234; these read YQKE…NPNT, YGKL…DPNA, IKDP…NPNV, RHEN…DPNQ, NGNT…EKAL, NGET…TVNI, and AGNT…ELNE. One can recognise a Glutamine amidotransferase type-1 domain in the interval 272–395; it reads KTKLIYQGGD…YLKVPILKEK (124 aa). Cysteine 377 serves as the catalytic Nucleophile.

The chain is Putative ankyrin repeat protein RF_0950 from Rickettsia felis (strain ATCC VR-1525 / URRWXCal2) (Rickettsia azadi).